The sequence spans 272 residues: CDAN1-interacting nuclease 1 (272 aa).

It localises to the nucleus. The protein resides in the cytoplasm. May play a role in erythroid cell differentiation. This is CDAN1-interacting nuclease 1 (CDIN1) from Gallus gallus (Chicken).